The primary structure comprises 300 residues: Lipoyl synthase 2 (300 aa).

Residues C46, C51, C57, C72, C76, C79, and S294 each contribute to the [4Fe-4S] cluster site. The region spanning 58–283 is the Radical SAM core domain; sequence YAQKTATFLL…GKLAREMGFS (226 aa).

It belongs to the radical SAM superfamily. Lipoyl synthase family. It depends on [4Fe-4S] cluster as a cofactor.

It localises to the cytoplasm. The enzyme catalyses [[Fe-S] cluster scaffold protein carrying a second [4Fe-4S](2+) cluster] + N(6)-octanoyl-L-lysyl-[protein] + 2 oxidized [2Fe-2S]-[ferredoxin] + 2 S-adenosyl-L-methionine + 4 H(+) = [[Fe-S] cluster scaffold protein] + N(6)-[(R)-dihydrolipoyl]-L-lysyl-[protein] + 4 Fe(3+) + 2 hydrogen sulfide + 2 5'-deoxyadenosine + 2 L-methionine + 2 reduced [2Fe-2S]-[ferredoxin]. Its pathway is protein modification; protein lipoylation via endogenous pathway; protein N(6)-(lipoyl)lysine from octanoyl-[acyl-carrier-protein]: step 2/2. Functionally, catalyzes the radical-mediated insertion of two sulfur atoms into the C-6 and C-8 positions of the octanoyl moiety bound to the lipoyl domains of lipoate-dependent enzymes, thereby converting the octanoylated domains into lipoylated derivatives. This chain is Lipoyl synthase 2, found in Nostoc sp. (strain PCC 7120 / SAG 25.82 / UTEX 2576).